Reading from the N-terminus, the 334-residue chain is MRLTPRALCSAAQAAWRENFPLCGRDVARWFPGHMAKGLKKMQSSLKLVDCIIEVHDARIPLSGRNPLFQETLGLKPHLLVLNKMDLADLTEQQKIMQHLEGEGLKNVIFTNCVKDENVKQIIPMVTELIGRSHRYHRKENLEYCIMVIGVPNVGKSSLINSLRRQHLRKGKATRVGGEPGITRAVMSKIQVSERPLMFLLDTPGVLAPRIESVETGLKLALCGTVLDHLVGEETMADYLLYTLNKHQRFGYVQHYGLGSACDNVERVLKSVAVKLGKTQKVKVLTGTGNVNIIQPNYPAAARDFLQTFRRGLLGSVMLDLDVLRGHPPAETLP.

A CP-type G domain is found at 36 to 209; that stretch reads AKGLKKMQSS…LLDTPGVLAP (174 aa). GTP contacts are provided by residues 83–86, 153–158, and Gly-205; these read NKMD and NVGKSS.

This sequence belongs to the TRAFAC class YlqF/YawG GTPase family. MTG1 subfamily. Associates with the mitochondrial ribosome large subunit; the association occurs in a GTP-dependent manner.

The protein localises to the mitochondrion inner membrane. Plays a role in the regulation of the mitochondrial ribosome assembly and of translational activity. Displays mitochondrial GTPase activity. The sequence is that of Mitochondrial ribosome-associated GTPase 1 (MTG1) from Homo sapiens (Human).